A 470-amino-acid chain; its full sequence is Cysteine--tRNA ligase (470 aa).

Position 28 (Cys28) interacts with Zn(2+). The short motif at 30 to 40 (PTVYNYIHIGN) is the 'HIGH' region element. The Zn(2+) site is built by Cys211, His236, and Glu240. A 'KMSKS' region motif is present at residues 270-274 (KMSKS). Position 273 (Lys273) interacts with ATP.

Belongs to the class-I aminoacyl-tRNA synthetase family. In terms of assembly, monomer. Requires Zn(2+) as cofactor.

It localises to the cytoplasm. It carries out the reaction tRNA(Cys) + L-cysteine + ATP = L-cysteinyl-tRNA(Cys) + AMP + diphosphate. In Enterococcus faecalis (strain ATCC 700802 / V583), this protein is Cysteine--tRNA ligase.